The sequence spans 553 residues: Dihydroxy-acid dehydratase (553 aa).

Residue aspartate 78 participates in Mg(2+) binding. A [2Fe-2S] cluster-binding site is contributed by cysteine 119. Residues aspartate 120 and lysine 121 each contribute to the Mg(2+) site. Lysine 121 bears the N6-carboxylysine mark. Cysteine 192 is a binding site for [2Fe-2S] cluster. Glutamate 442 is a Mg(2+) binding site. Serine 468 acts as the Proton acceptor in catalysis.

The protein belongs to the IlvD/Edd family. As to quaternary structure, homodimer. [2Fe-2S] cluster is required as a cofactor. It depends on Mg(2+) as a cofactor.

The catalysed reaction is (2R)-2,3-dihydroxy-3-methylbutanoate = 3-methyl-2-oxobutanoate + H2O. It carries out the reaction (2R,3R)-2,3-dihydroxy-3-methylpentanoate = (S)-3-methyl-2-oxopentanoate + H2O. Its pathway is amino-acid biosynthesis; L-isoleucine biosynthesis; L-isoleucine from 2-oxobutanoate: step 3/4. It functions in the pathway amino-acid biosynthesis; L-valine biosynthesis; L-valine from pyruvate: step 3/4. Functionally, functions in the biosynthesis of branched-chain amino acids. Catalyzes the dehydration of (2R,3R)-2,3-dihydroxy-3-methylpentanoate (2,3-dihydroxy-3-methylvalerate) into 2-oxo-3-methylpentanoate (2-oxo-3-methylvalerate) and of (2R)-2,3-dihydroxy-3-methylbutanoate (2,3-dihydroxyisovalerate) into 2-oxo-3-methylbutanoate (2-oxoisovalerate), the penultimate precursor to L-isoleucine and L-valine, respectively. This chain is Dihydroxy-acid dehydratase, found in Campylobacter hominis (strain ATCC BAA-381 / DSM 21671 / CCUG 45161 / LMG 19568 / NCTC 13146 / CH001A).